A 555-amino-acid polypeptide reads, in one-letter code: Formate--tetrahydrofolate ligase (555 aa).

65–72 contributes to the ATP binding site; sequence TPAGEGKT.

It belongs to the formate--tetrahydrofolate ligase family.

It catalyses the reaction (6S)-5,6,7,8-tetrahydrofolate + formate + ATP = (6R)-10-formyltetrahydrofolate + ADP + phosphate. Its pathway is one-carbon metabolism; tetrahydrofolate interconversion. This Thermoanaerobacter pseudethanolicus (strain ATCC 33223 / 39E) (Clostridium thermohydrosulfuricum) protein is Formate--tetrahydrofolate ligase.